The primary structure comprises 264 residues: tRNA pseudouridine synthase A (264 aa).

Catalysis depends on D51, which acts as the Nucleophile. Residue Y109 participates in substrate binding.

This sequence belongs to the tRNA pseudouridine synthase TruA family. Homodimer.

It catalyses the reaction uridine(38/39/40) in tRNA = pseudouridine(38/39/40) in tRNA. In terms of biological role, formation of pseudouridine at positions 38, 39 and 40 in the anticodon stem and loop of transfer RNAs. The sequence is that of tRNA pseudouridine synthase A from Vibrio cholerae serotype O1 (strain ATCC 39541 / Classical Ogawa 395 / O395).